Reading from the N-terminus, the 426-residue chain is Serine--tRNA ligase (426 aa).

233 to 235 provides a ligand contact to L-serine; the sequence is TSE. Position 264–266 (264–266) interacts with ATP; that stretch reads RAE. Glu287 provides a ligand contact to L-serine. 351–354 contacts ATP; that stretch reads EISS. Ser387 is a binding site for L-serine.

This sequence belongs to the class-II aminoacyl-tRNA synthetase family. Type-1 seryl-tRNA synthetase subfamily. Homodimer. The tRNA molecule binds across the dimer.

The protein localises to the cytoplasm. It carries out the reaction tRNA(Ser) + L-serine + ATP = L-seryl-tRNA(Ser) + AMP + diphosphate + H(+). It catalyses the reaction tRNA(Sec) + L-serine + ATP = L-seryl-tRNA(Sec) + AMP + diphosphate + H(+). It participates in aminoacyl-tRNA biosynthesis; selenocysteinyl-tRNA(Sec) biosynthesis; L-seryl-tRNA(Sec) from L-serine and tRNA(Sec): step 1/1. Its function is as follows. Catalyzes the attachment of serine to tRNA(Ser). Is also able to aminoacylate tRNA(Sec) with serine, to form the misacylated tRNA L-seryl-tRNA(Sec), which will be further converted into selenocysteinyl-tRNA(Sec). This is Serine--tRNA ligase from Stenotrophomonas maltophilia (strain K279a).